The sequence spans 185 residues: Translation initiation factor IF-3 (185 aa).

It belongs to the IF-3 family. Monomer.

The protein resides in the cytoplasm. Functionally, IF-3 binds to the 30S ribosomal subunit and shifts the equilibrium between 70S ribosomes and their 50S and 30S subunits in favor of the free subunits, thus enhancing the availability of 30S subunits on which protein synthesis initiation begins. This is Translation initiation factor IF-3 from Coxiella burnetii (strain RSA 493 / Nine Mile phase I).